Here is a 251-residue protein sequence, read N- to C-terminus: MEPKIKIRGVNFFYHRHQVLKNINMDFPDRQITAIIGPSGCGKSTLLRALNRMNDLVSGARLEGEVLLDNENVYSPNLDVVNLRKRVGMVFQQPNPFPKSIFDNVAFGPRMLGITAQSRLNEIVEKSLHQAALWDEVKDNLHKSGMALSGGQQQRLCIARVLAVEPEVILMDEPCSALDPVSTMRIEELMQELKQNYTIAIVTHNMQQAARASDWTGFLLTGDLIEYGRTGEIFSRPKDKRTEDYITGRFG.

One can recognise an ABC transporter domain in the interval 5-246 (IKIRGVNFFY…PKDKRTEDYI (242 aa)). Residue 37–44 (GPSGCGKS) participates in ATP binding.

It belongs to the ABC transporter superfamily. Phosphate importer (TC 3.A.1.7) family. As to quaternary structure, the complex is composed of two ATP-binding proteins (PstB), two transmembrane proteins (PstC and PstA) and a solute-binding protein (PstS).

The protein localises to the cell membrane. The catalysed reaction is phosphate(out) + ATP + H2O = ADP + 2 phosphate(in) + H(+). Its function is as follows. Part of the ABC transporter complex PstSACB involved in phosphate import. Responsible for energy coupling to the transport system. The sequence is that of Phosphate import ATP-binding protein PstB from Dehalococcoides mccartyi (strain ATCC BAA-2266 / KCTC 15142 / 195) (Dehalococcoides ethenogenes (strain 195)).